A 620-amino-acid chain; its full sequence is UvrABC system protein C (620 aa).

Residues 13–92 form the GIY-YIG domain; sequence DKPGVYIMKN…IKKYSPRYNI (80 aa). In terms of domain architecture, UVR spans 204 to 239; sequence TSIIKNLKLEMEKAAEELEFEKAAKIRDRILAIELI.

It belongs to the UvrC family. As to quaternary structure, interacts with UvrB in an incision complex.

The protein localises to the cytoplasm. Its function is as follows. The UvrABC repair system catalyzes the recognition and processing of DNA lesions. UvrC both incises the 5' and 3' sides of the lesion. The N-terminal half is responsible for the 3' incision and the C-terminal half is responsible for the 5' incision. This Clostridium perfringens (strain SM101 / Type A) protein is UvrABC system protein C.